A 550-amino-acid polypeptide reads, in one-letter code: Hydroxylamine reductase (550 aa).

Residues Cys3, Cys6, Cys18, and Cys25 each contribute to the [2Fe-2S] cluster site. The hybrid [4Fe-2O-2S] cluster site is built by His249, Glu273, Cys317, Cys405, Cys433, Cys458, Glu492, and Lys494. Cys405 is modified (cysteine persulfide).

Belongs to the HCP family. [2Fe-2S] cluster is required as a cofactor. Requires hybrid [4Fe-2O-2S] cluster as cofactor.

It is found in the cytoplasm. The catalysed reaction is A + NH4(+) + H2O = hydroxylamine + AH2 + H(+). Its function is as follows. Catalyzes the reduction of hydroxylamine to form NH(3) and H(2)O. The polypeptide is Hydroxylamine reductase (Escherichia coli (strain SMS-3-5 / SECEC)).